A 322-amino-acid chain; its full sequence is Atrochrysone carboxyl ACP thioesterase dmxR1 (322 aa).

4 residues coordinate Zn(2+): His105, His107, Asp109, and His110. Asp109 (proton donor/acceptor) is an active-site residue.

It belongs to the metallo-beta-lactamase superfamily. It depends on Zn(2+) as a cofactor.

The catalysed reaction is atrochrysone carboxyl-[ACP] + H2O = atrochrysone carboxylate + holo-[ACP] + H(+). It functions in the pathway secondary metabolite biosynthesis. Its function is as follows. Atrochrysone carboxyl ACP thioesterase; part of the gene cluster that mediates the biosynthesis of the dimeric xanthones cryptosporioptides. The pathway begins with the synthesis of atrochrysone thioester by the polyketide synthase dmx-nrPKS. The atrochrysone carboxyl ACP thioesterase dmxR1 then breaks the thioester bond and releases the atrochrysone carboxylic acid from dmx-nrPKS. Atrochrysone carboxylic acid is decarboxylated by the decarboxylase dmxR15, and oxidized by the anthrone oxygenase dmxR16 to yield emodin. Emodin is then reduced to emodin hydroquinone by the oxidoreductase dmxR7. A-ring reduction by the short chain dehydrogenase dmxR18, dehydration by the scytalone dehydratase-like protein dmxR17 and probable spontaneous re-oxidation, results in overall deoxygenation to chrysophanol. Baeyer-Villiger oxidation by the Baeyer-Villiger monooxygenase (BVMO) dmxR6 then yields monodictylactone in equilibrium with monodictyphenone. In the case of the cryptosporioptides biosynthesis, monodictylactone is reduced at C-12 to an alcohol (by the short chain dehydrogenases dmxR12 or dmxR8) and hydroxylated at C-5 by dmxR9, yielding the electron-rich aromatic which could eliminate H(2)O to form the ortho-quinonemethide, followed by tautomerisation to paraquinone and complete the formal reduction to produce the 10-methylgroup. Conjugate addition of C-4a-OH to the resulting paraquinone by the monooxygenase dmxR10 then gives cyclohexadienone, which is then reduced at C-5 by the short chain dehydrogenase dmxR3 to give the dihydroxanthone. The 6,7-epoxide in the cryptosporioptides could be introduced by the cytochrome P450 monooxygenase dmxL3. The highly reducing PKS dmxL2 manufactures butyrate, which is further carboxylated by dmxL1 to form ethylmalonate. It is not yet clear whether the carboxylation occurs while the butyrate is attached to the ACP of dmxL2, but this unusual fungal metabolite could then be esterified to O-5 by the O-acetyltransferase dmxR13. Finally, dimerization performed by dmxR5 gives the observed dimers cryptosporioptides A, B and C as the final products of the pathway. The chain is Atrochrysone carboxyl ACP thioesterase dmxR1 from Cryptosporiopsis sp. (strain 8999).